The following is a 1048-amino-acid chain: Ankyrin repeat domain-containing protein 27 (1048 aa).

Residues 1 to 372 (MALYDEDLLK…RQGSLSTKTP (372 aa)) are sufficient for GEF activity towards RAB21. The region spanning 233 to 371 (ASEDAAFNKI…IRQGSLSTKT (139 aa)) is the VPS9 domain. ANK repeat units lie at residues 396–426 (TPID…DKDA), 462–491 (RGQT…VVNA), 495–524 (HGST…STEV), 528–557 (NGNT…QACR), 564–593 (KGDT…PTAV), and 597–627 (LKET…RPRP). The interval 396–460 (TPIDCLFKHI…PSVVTPFSRD (65 aa)) is sufficient for interaction with VPS29. The interaction with RAB38 stretch occupies residues 451–600 (PSVVTPFSRD…TAVQNRLKET (150 aa)). Residues 451–729 (PSVVTPFSRD…CAPAQKLARI (279 aa)) form an interaction with RAB32 region. Basic and acidic residues predominate over residues 618 to 627 (HLSSDRRPRP). Residues 618-650 (HLSSDRRPRPSEVPAQSPTRSVDSISQGSSTSS) are disordered. Residues 638–650 (SVDSISQGSSTSS) are compositionally biased toward low complexity. The tract at residues 658 to 707 (FRQEEVKKDYREVEKLLRAVADGDLEMVRYLLEWTEDDLDDVEDAISTVD) is required for interaction with VAMP7. 5 ANK repeats span residues 668-698 (REVE…DLDD), 742-771 (DGFS…YSGA), 775-804 (SQAV…KPNK), 808-837 (SGNT…SINA), and 841-870 (KGNT…SVDI). Positions 692 to 745 (TEDDLDDVEDAISTVDLEFCHPLCQCPKCAPAQKLARISANGLSVNVTNQDGFS) are sufficient for interaction with VPS29. Residues 949–962 (ERTSRETMGRDRSV) are compositionally biased toward basic and acidic residues. A disordered region spans residues 949 to 1019 (ERTSRETMGR…AAPGHRPMVR (71 aa)). A phosphoserine mark is found at Ser-961 and Ser-969. Positions 979 to 995 (TGKQSDLSDLSRYQTSE) are enriched in polar residues. Basic and acidic residues predominate over residues 996 to 1006 (EGNKGLPERPV). Thr-1022 carries the post-translational modification Phosphothreonine.

In terms of assembly, interacts with RAB21 (GDP-bound form), VPS29, KIF5A, KIF5C, GOLGA4. Interacts with RAB32 (GTP-bound form), RAB38 (GTP-bound form), VAMP7. Interacts with low affinity with RAB5. ANKRD27:RAB32 heterodimers can homodimerize to form tetramers. Can interact with RAB38 or RAB32, VPS29 and VAMP7 simultaneously. A decreased interaction with RAB32 seen in the presence of SGSM2.

The protein localises to the early endosome. It localises to the late endosome. It is found in the cytoplasmic vesicle membrane. Its subcellular location is the lysosome. The protein resides in the cell membrane. The protein localises to the melanosome. It localises to the cytoplasmic vesicle. In terms of biological role, may be a guanine exchange factor (GEF) for Rab21, Rab32 and Rab38 and regulate endosome dynamics. May regulate the participation of VAMP7 in membrane fusion events; in vitro inhibits VAMP7-mediated SNARE complex formation by trapping VAMP7 in a closed, fusogenically inactive conformation. Involved in peripheral melanosomal distribution of TYRP1 in melanocytes; the function, which probably is implicating vesicle-trafficking, includes cooperation with Rab32, Rab38 and VAMP7. Involved in the regulation of neurite growth; the function seems to require its GEF activity, probably towards Rab21, and VAMP7 but not Rab32/38. Proposed to be involved in Golgi sorting of VAMP7 and transport of VAMP7 vesicles to the cell surface; the function seems to implicate kinesin heavy chain isoform 5 proteins, GOLGA4, RAB21 and MACF1. Required for the colocalization of VAMP7 and Rab21, probably on TGN sites. Involved in GLUT1 endosome-to-plasma membrane trafficking; the function is dependent of association with VPS29. Regulates the proper trafficking of melanogenic enzymes TYR, TYRP1 and DCT/TYRP2 to melanosomes in melanocytes. This is Ankyrin repeat domain-containing protein 27 (Ankrd27) from Mus musculus (Mouse).